A 194-amino-acid chain; its full sequence is ATP-dependent Clp protease proteolytic subunit (194 aa).

Residue serine 98 is the Nucleophile of the active site. Residue histidine 123 is part of the active site.

It belongs to the peptidase S14 family. Fourteen ClpP subunits assemble into 2 heptameric rings which stack back to back to give a disk-like structure with a central cavity, resembling the structure of eukaryotic proteasomes.

The protein localises to the cytoplasm. The catalysed reaction is Hydrolysis of proteins to small peptides in the presence of ATP and magnesium. alpha-casein is the usual test substrate. In the absence of ATP, only oligopeptides shorter than five residues are hydrolyzed (such as succinyl-Leu-Tyr-|-NHMec, and Leu-Tyr-Leu-|-Tyr-Trp, in which cleavage of the -Tyr-|-Leu- and -Tyr-|-Trp bonds also occurs).. Its function is as follows. Cleaves peptides in various proteins in a process that requires ATP hydrolysis. Has a chymotrypsin-like activity. Plays a major role in the degradation of misfolded proteins. The protein is ATP-dependent Clp protease proteolytic subunit of Wigglesworthia glossinidia brevipalpis.